A 219-amino-acid polypeptide reads, in one-letter code: Large ribosomal subunit protein bL25 (219 aa).

The segment at 194–219 (SSTELEETPEVPASAVPTTDQGESAE) is disordered. Positions 209–219 (VPTTDQGESAE) are enriched in polar residues.

The protein belongs to the bacterial ribosomal protein bL25 family. CTC subfamily. In terms of assembly, part of the 50S ribosomal subunit; part of the 5S rRNA/L5/L18/L25 subcomplex. Contacts the 5S rRNA. Binds to the 5S rRNA independently of L5 and L18.

Its function is as follows. This is one of the proteins that binds to the 5S RNA in the ribosome where it forms part of the central protuberance. The chain is Large ribosomal subunit protein bL25 from Legionella pneumophila (strain Paris).